The following is a 143-amino-acid chain: Small ribosomal subunit protein uS12 (143 aa).

Basic residues predominate over residues 1 to 15 (MGKCRGLRTARKLRD). The tract at residues 1–27 (MGKCRGLRTARKLRDHRREQKWHDKQY) is disordered. Residues 16-27 (HRREQKWHDKQY) show a composition bias toward basic and acidic residues.

This sequence belongs to the universal ribosomal protein uS12 family. Component of the 40S small ribosomal subunit.

It localises to the cytoplasm. It is found in the cytosol. The protein resides in the rough endoplasmic reticulum. This is Small ribosomal subunit protein uS12 (rps23) from Ictalurus punctatus (Channel catfish).